The sequence spans 355 residues: Trans-enoyl reductase (355 aa).

45–48 contributes to the NADP(+) binding site; it reads VDTK. 131–138 contacts substrate; it reads ISFMTTGL. Residues 166–169, 189–192, Tyr207, and 254–255 each bind NADP(+); these read SSAT, SPRN, and LE. 275–279 serves as a coordination point for substrate; it reads GPQML. Position 344–345 (344–345) interacts with NADP(+); the sequence is IS.

The protein belongs to the zinc-containing alcohol dehydrogenase family. Monomer.

The catalysed reaction is L-serine + 7 malonyl-CoA + acetyl-CoA + 2 S-adenosyl-L-methionine + ATP + 8 NADPH + 11 H(+) = (5S)-3-[(2E,6R,8E,10E,12E)-2,6-dimethyltetradeca-2,8,10,12-tetraenoyl]-5-(hydroxymethyl)pyrrolidine-2,4-dione + AMP + 2 S-adenosyl-L-homocysteine + 7 CO2 + diphosphate + 8 NADP(+) + 8 CoA + 6 H2O. Its pathway is mycotoxin biosynthesis. Hybrid PKS-NRPS synthetase; part of the gene cluster that mediates the biosynthesis of trichosetin, a trans-fused decalin-containing tetramic acid with antimicrobial activity. The PKS module of PKS-NRPS1 together with the enoylreductase (ER) catalyze the formation of the polyketide unit which is then conjugated to L-serine by the condensation domain of the PKS-NRPS1 NRPS module. Activity of the Dieckmann cyclase domain (RED) results in release of the Dieckmann product intermediate. Diels-Alderase (DA) is involved in endo-selective Diels-Alder cycloaddition to form the decalin ring, leading to the production of N-desmethylequisetin also called trichosetin. The cluster does not contain the equisetin N-methyltransferase and consequently, trichosetin is isolated as final product. The polypeptide is Trans-enoyl reductase (Gibberella fujikuroi (strain CBS 195.34 / IMI 58289 / NRRL A-6831) (Bakanae and foot rot disease fungus)).